The sequence spans 396 residues: F-box protein At2g21930 (396 aa).

The F-box domain occupies 19–65; that stretch reads SGNSVQIPFDLIPEILKRLPVKTLARFLSVSKEYTSIIRNRDFMKSY.

The sequence is that of F-box protein At2g21930 from Arabidopsis thaliana (Mouse-ear cress).